The primary structure comprises 557 residues: Dihydroxy-acid dehydratase (557 aa).

A Mg(2+)-binding site is contributed by Asp78. Position 119 (Cys119) interacts with [2Fe-2S] cluster. 2 residues coordinate Mg(2+): Asp120 and Lys121. Lys121 carries the post-translational modification N6-carboxylysine. Cys192 provides a ligand contact to [2Fe-2S] cluster. Glu442 provides a ligand contact to Mg(2+). The Proton acceptor role is filled by Ser468.

Belongs to the IlvD/Edd family. Homodimer. [2Fe-2S] cluster is required as a cofactor. It depends on Mg(2+) as a cofactor.

The enzyme catalyses (2R)-2,3-dihydroxy-3-methylbutanoate = 3-methyl-2-oxobutanoate + H2O. It catalyses the reaction (2R,3R)-2,3-dihydroxy-3-methylpentanoate = (S)-3-methyl-2-oxopentanoate + H2O. It participates in amino-acid biosynthesis; L-isoleucine biosynthesis; L-isoleucine from 2-oxobutanoate: step 3/4. The protein operates within amino-acid biosynthesis; L-valine biosynthesis; L-valine from pyruvate: step 3/4. Its function is as follows. Functions in the biosynthesis of branched-chain amino acids. Catalyzes the dehydration of (2R,3R)-2,3-dihydroxy-3-methylpentanoate (2,3-dihydroxy-3-methylvalerate) into 2-oxo-3-methylpentanoate (2-oxo-3-methylvalerate) and of (2R)-2,3-dihydroxy-3-methylbutanoate (2,3-dihydroxyisovalerate) into 2-oxo-3-methylbutanoate (2-oxoisovalerate), the penultimate precursor to L-isoleucine and L-valine, respectively. The sequence is that of Dihydroxy-acid dehydratase from Bacillus cereus (strain Q1).